We begin with the raw amino-acid sequence, 329 residues long: MHNLSLFEPGRGNVSCGGPFLGCPNESNPAPLPLPQPLAVAVPVVYGVICAVGLAGNSAVLYVLLRTPRMKTVTNVFILNLAIADELFTLVLPINIADFLLRRWPFGEVMCKLIVAVDQYNTFSSLYFLAVMSADRYLVVLATAESRRVSGRTYGAARAVSLAVWALVTLVVLPFAVFARLDEEQGRRQCVLVFPQPEAFWWRASRLYTLVLGFAIPVSTICALYITLLCRLRAIQLDSHAKALDRAKKRVTLLVVAILAVCLLCWTPYHLSTIVALTTDLPQTPLVIGISYFITSLSYANSCLNPFLYAFLDDSFRRSLRQLVSCRTA.

Residues 1–39 (MHNLSLFEPGRGNVSCGGPFLGCPNESNPAPLPLPQPLA) are Extracellular-facing. N-linked (GlcNAc...) asparagine glycans are attached at residues Asn3, Asn13, and Asn25. Residues 40-63 (VAVPVVYGVICAVGLAGNSAVLYV) traverse the membrane as a helical segment. At 64–74 (LLRTPRMKTVT) the chain is on the cytoplasmic side. Residues 75–99 (NVFILNLAIADELFTLVLPINIADF) traverse the membrane as a helical segment. The Extracellular portion of the chain corresponds to 100-114 (LLRRWPFGEVMCKLI). Cys111 and Cys190 are oxidised to a cystine. Residues 115-134 (VAVDQYNTFSSLYFLAVMSA) form a helical membrane-spanning segment. Over 135 to 159 (DRYLVVLATAESRRVSGRTYGAARA) the chain is Cytoplasmic. A helical transmembrane segment spans residues 160-179 (VSLAVWALVTLVVLPFAVFA). At 180–204 (RLDEEQGRRQCVLVFPQPEAFWWRA) the chain is on the extracellular side. The chain crosses the membrane as a helical span at residues 205–226 (SRLYTLVLGFAIPVSTICALYI). At 227–250 (TLLCRLRAIQLDSHAKALDRAKKR) the chain is on the cytoplasmic side. A helical membrane pass occupies residues 251-275 (VTLLVVAILAVCLLCWTPYHLSTIV). At 276 to 285 (ALTTDLPQTP) the chain is on the extracellular side. The helical transmembrane segment at 286–300 (LVIGISYFITSLSYA) threads the bilayer. Residues 301–329 (NSCLNPFLYAFLDDSFRRSLRQLVSCRTA) lie on the Cytoplasmic side of the membrane.

It belongs to the G-protein coupled receptor 1 family.

It localises to the cell membrane. Functionally, interacts specifically with a number of opioid ligands. Receptor for neuropeptides B and W, which may be involved in neuroendocrine system regulation, food intake and the organization of other signals. The protein is Neuropeptides B/W receptor type 1 (Npbwr1) of Rattus norvegicus (Rat).